The sequence spans 489 residues: Dihydropyrimidinase 1 (489 aa).

Positions 61, 63, and 156 each coordinate Zn(2+). At lysine 156 the chain carries N6-carboxylysine. Tyrosine 161 is a binding site for substrate. Residues histidine 189 and histidine 245 each contribute to the Zn(2+) site. Serine 295 is a binding site for substrate. Position 323 (aspartate 323) interacts with Zn(2+). Asparagine 344 contributes to the substrate binding site.

This sequence belongs to the metallo-dependent hydrolases superfamily. Hydantoinase/dihydropyrimidinase family. In terms of assembly, homotetramer. Zn(2+) serves as cofactor. Post-translationally, carboxylation allows a single lysine to coordinate two zinc ions. As to expression, in L1-L2 larvae, expressed in body hypodermal cells, hemidesmosomes and in a neuronal cell between the pharynx and ring neuropil. In adults, expression is seen in body hypodermal cells and pharynx.

It localises to the nucleus. The catalysed reaction is 5,6-dihydrouracil + H2O = 3-(carbamoylamino)propanoate + H(+). In Caenorhabditis elegans, this protein is Dihydropyrimidinase 1 (dhp-1).